Here is a 191-residue protein sequence, read N- to C-terminus: NADH-quinone oxidoreductase subunit B (191 aa).

Cysteine 52, cysteine 53, cysteine 118, and cysteine 148 together coordinate [4Fe-4S] cluster.

The protein belongs to the complex I 20 kDa subunit family. NDH-1 is composed of 14 different subunits. Subunits NuoB, C, D, E, F, and G constitute the peripheral sector of the complex. [4Fe-4S] cluster is required as a cofactor.

It is found in the cell inner membrane. It carries out the reaction a quinone + NADH + 5 H(+)(in) = a quinol + NAD(+) + 4 H(+)(out). Functionally, NDH-1 shuttles electrons from NADH, via FMN and iron-sulfur (Fe-S) centers, to quinones in the respiratory chain. The immediate electron acceptor for the enzyme in this species is believed to be a menaquinone. Couples the redox reaction to proton translocation (for every two electrons transferred, four hydrogen ions are translocated across the cytoplasmic membrane), and thus conserves the redox energy in a proton gradient. The polypeptide is NADH-quinone oxidoreductase subunit B (Azobacteroides pseudotrichonymphae genomovar. CFP2).